A 136-amino-acid polypeptide reads, in one-letter code: Protein NrdI (136 aa).

This sequence belongs to the NrdI family.

Its function is as follows. Probably involved in ribonucleotide reductase function. This Klebsiella pneumoniae subsp. pneumoniae (strain ATCC 700721 / MGH 78578) protein is Protein NrdI.